The chain runs to 261 residues: Early 31 kDa protein (261 aa).

Residues Ile-230–Gln-261 are disordered. The span at Asp-236 to Gln-261 shows a compositional bias: acidic residues.

The protein is Early 31 kDa protein of Frog virus 3 (isolate Goorha) (FV-3).